Consider the following 154-residue polypeptide: Ubiquitin-like protein 4A (154 aa).

One can recognise a Ubiquitin-like domain in the interval 1 to 76 (MILTVKPLQG…LNLVVRPAGE (76 aa)).

As to quaternary structure, component of the bag6/bat3 complex.

The protein localises to the cytoplasm. Its subcellular location is the cytosol. It localises to the nucleus. In terms of biological role, as part of a cytosolic protein quality control complex, the bag6/bat3 complex, maintains misfolded and hydrophobic patches-containing proteins in a soluble state and participates in their proper delivery to the endoplasmic reticulum or alternatively can promote their sorting to the proteasome where they undergo degradation. The bag6/bat3 complex is involved in the post-translational delivery of tail-anchored/type II transmembrane proteins to the endoplasmic reticulum membrane. Similarly, the bag6/bat3 complex also functions as a sorting platform for proteins of the secretory pathway that are mislocalized to the cytosol either delivering them to the proteasome for degradation or to the endoplasmic reticulum. The bag6/bat3 complex also plays a role in the endoplasmic reticulum-associated degradation (ERAD), a quality control mechanism that eliminates unwanted proteins of the endoplasmic reticulum through their retrotranslocation to the cytosol and their targeting to the proteasome. It maintains these retrotranslocated proteins in an unfolded yet soluble state condition in the cytosol to ensure their proper delivery to the proteasome. This Esox lucius (Northern pike) protein is Ubiquitin-like protein 4A (ubl4a).